Consider the following 414-residue polypeptide: Putative truncated GMC-type inactive oxidoreductase R832 (414 aa).

A signal peptide spans 1-20 (MNPTKLFLVFVAFAFAIINA). 38 to 67 (DYIIVGSGPGGSRAVQQCIAKGHKCTLVER) is a binding site for FAD.

The protein belongs to the GMC oxidoreductase family. FAD is required as a cofactor.

This Acanthamoeba polyphaga (Amoeba) protein is Putative truncated GMC-type inactive oxidoreductase R832.